A 121-amino-acid chain; its full sequence is Large ribosomal subunit protein bL17 (121 aa).

Belongs to the bacterial ribosomal protein bL17 family. Part of the 50S ribosomal subunit. Contacts protein L32.

The chain is Large ribosomal subunit protein bL17 from Rubrobacter xylanophilus (strain DSM 9941 / JCM 11954 / NBRC 16129 / PRD-1).